The following is a 79-amino-acid chain: Putative defensin-like protein 29 (79 aa).

An N-terminal signal peptide occupies residues 1–26; the sequence is MASSGKCVFLVFLCMVALLAPSEVHA. Intrachain disulfides connect C45–C65, C51–C74, and C55–C76.

Belongs to the DEFL family.

It localises to the secreted. In Arabidopsis thaliana (Mouse-ear cress), this protein is Putative defensin-like protein 29.